A 183-amino-acid chain; its full sequence is Adenylate kinase (183 aa).

Residue 7–15 coordinates ATP; the sequence is GVAGVGKTT.

This sequence belongs to the archaeal adenylate kinase family.

It localises to the cytoplasm. The catalysed reaction is AMP + ATP = 2 ADP. The protein is Adenylate kinase (adkA) of Thermoplasma acidophilum (strain ATCC 25905 / DSM 1728 / JCM 9062 / NBRC 15155 / AMRC-C165).